Consider the following 376-residue polypeptide: RNA binding protein fox-1 homolog 1 (376 aa).

The tract at residues 1-126 is disordered; sequence MEEKGSRMVQ…QPKRLHVSNI (126 aa). Over residues 72–89 the composition is skewed to polar residues; that stretch reads QTHSEQSPADTNAQTVSG. Positions 90–101 are enriched in low complexity; that stretch reads TATQTDDAAPTD. A compositionally biased stretch (polar residues) spans 102–115; sequence GQPQTQPSENTENK. Residues 119 to 195 form the RRM domain; the sequence is KRLHVSNIPF…RKIEVNNATA (77 aa). R319 is modified (asymmetric dimethylarginine).

As to quaternary structure, binds to the C-terminus of ATXN2.

It localises to the nucleus. It is found in the cytoplasm. Its function is as follows. RNA-binding protein that regulates alternative splicing events by binding to 5'-UGCAUGU-3' elements. Prevents binding of U2AF2 to the 3'-splice site. Regulates alternative splicing of tissue-specific exons and of differentially spliced exons during erythropoiesis. This is RNA binding protein fox-1 homolog 1 (RBFOX1) from Macaca fascicularis (Crab-eating macaque).